A 158-amino-acid chain; its full sequence is Complexin-3 (158 aa).

The segment at 14 to 47 is disordered; it reads KNLTGSLGGGEDKGDGDKSAAEAQGMSREEYEEY. Positions 23–33 are enriched in basic and acidic residues; the sequence is GEDKGDGDKSA. Residues 39–74 adopt a coiled-coil conformation; sequence MSREEYEEYQKQLVEEKMERDAQFTQRKAERATLRS. Residue Cys155 is modified to Cysteine methyl ester. Residue Cys155 is the site of S-farnesyl cysteine attachment. A propeptide spans 156-158 (removed in mature form); sequence HIM.

Belongs to the complexin/synaphin family. Binds to the SNARE core complex containing SNAP25, VAMP2 and STX1A. In terms of processing, farnesylation mediates presynaptic targeting. As to expression, present in many brain regions, including hippocampus and cerebellum (at protein level). Expressed in the retina (at protein level). Expressed in retinal amacrine cells (at protein level). Expressed in retinal photoreceptor ribbon synapses. Expressed in the retinal inner nuclear layer, at bipolar cells (at protein level). Expressed in cone photoreceptor synaptic terminals (at protein level).

It localises to the synapse. It is found in the cell membrane. Its function is as follows. Complexin that regulates SNARE protein complex-mediated synaptic vesicle fusion. Required for the maintenance of synaptic ultrastructure in the adult retina. Positively regulates synaptic transmission through synaptic vesicle availability and exocytosis of neurotransmitters at photoreceptor ribbon synapses in the retina. Suppresses tonic photoreceptor activity and baseline 'noise' by suppression of Ca(2+) vesicle tonic release and the facilitation of evoked synchronous and asynchronous Ca(2+) vesicle release. The polypeptide is Complexin-3 (Cplx3) (Mus musculus (Mouse)).